The primary structure comprises 289 residues: Ribosomal RNA small subunit methyltransferase A (289 aa).

S-adenosyl-L-methionine is bound by residues His-27, Leu-29, Gly-54, Glu-76, Asp-102, and Asn-123.

The protein belongs to the class I-like SAM-binding methyltransferase superfamily. rRNA adenine N(6)-methyltransferase family. RsmA subfamily.

It is found in the cytoplasm. It carries out the reaction adenosine(1518)/adenosine(1519) in 16S rRNA + 4 S-adenosyl-L-methionine = N(6)-dimethyladenosine(1518)/N(6)-dimethyladenosine(1519) in 16S rRNA + 4 S-adenosyl-L-homocysteine + 4 H(+). Its function is as follows. Specifically dimethylates two adjacent adenosines (A1518 and A1519) in the loop of a conserved hairpin near the 3'-end of 16S rRNA in the 30S particle. May play a critical role in biogenesis of 30S subunits. In Maricaulis maris (strain MCS10) (Caulobacter maris), this protein is Ribosomal RNA small subunit methyltransferase A.